Here is a 327-residue protein sequence, read N- to C-terminus: tRNA uridine(34) hydroxylase (327 aa).

The region spanning 142–240 (DDPDTLVIDT…YLEQVPEAES (99 aa)) is the Rhodanese domain. Cysteine 200 serves as the catalytic Cysteine persulfide intermediate.

It belongs to the TrhO family.

The enzyme catalyses uridine(34) in tRNA + AH2 + O2 = 5-hydroxyuridine(34) in tRNA + A + H2O. Catalyzes oxygen-dependent 5-hydroxyuridine (ho5U) modification at position 34 in tRNAs. In Synechococcus sp. (strain CC9605), this protein is tRNA uridine(34) hydroxylase.